The following is a 292-amino-acid chain: HTH-type transcriptional regulator BlaA (292 aa).

One can recognise an HTH lysR-type domain in the interval 5-62 (LPLNALRAFEASARHLNFTKAALELYVTQGAVSQQVRMLEERLGVILFKRLPRGLEMT). Positions 22-41 (FTKAALELYVTQGAVSQQVR) form a DNA-binding region, H-T-H motif.

This sequence belongs to the LysR transcriptional regulatory family.

Functionally, positive regulator of the expression of the gene (blaB) for beta-lactamase. The sequence is that of HTH-type transcriptional regulator BlaA (blaA) from Proteus vulgaris.